The following is a 62-amino-acid chain: Small ribosomal subunit protein eS27 (62 aa).

Zn(2+) is bound by residues cysteine 17, cysteine 20, cysteine 36, and cysteine 39. A C4-type zinc finger spans residues 17-39 (CPDCENEQVVFERASTVVECTVC).

The protein belongs to the eukaryotic ribosomal protein eS27 family. As to quaternary structure, part of the 30S ribosomal subunit. It depends on Zn(2+) as a cofactor.

This is Small ribosomal subunit protein eS27 from Methanoculleus marisnigri (strain ATCC 35101 / DSM 1498 / JR1).